A 381-amino-acid polypeptide reads, in one-letter code: Alkanesulfonate monooxygenase (381 aa).

The protein belongs to the SsuD family. Homotetramer.

The enzyme catalyses an alkanesulfonate + FMNH2 + O2 = an aldehyde + FMN + sulfite + H2O + 2 H(+). Functionally, catalyzes the desulfonation of aliphatic sulfonates. This Escherichia coli (strain SE11) protein is Alkanesulfonate monooxygenase.